A 374-amino-acid polypeptide reads, in one-letter code: Glyceraldehyde-3-phosphate dehydrogenase A, chloroplastic (374 aa).

A chloroplast-targeting transit peptide spans 1 to 34 (MAAMMQKSAFTGSAVSSKSGVRAKAARAVVDVRA). NADP(+) is bound by residues 47–48 (RI), aspartate 71, and arginine 116. The cysteines at positions 55 and 325 are disulfide-linked. Residues 189 to 191 (SCT), threonine 220, arginine 235, 248 to 249 (TG), and arginine 271 contribute to the D-glyceraldehyde 3-phosphate site. Cysteine 190 functions as the Nucleophile in the catalytic mechanism. NADP(+) is bound at residue asparagine 353.

This sequence belongs to the glyceraldehyde-3-phosphate dehydrogenase family. In terms of assembly, homotetramer. Component of a complex that contains two dimers of PRK, two tetramers of GAPDH and CP12. CP12 associates with GAPDH, causing its conformation to change. This GAPDH/CP12 complex binds PRK to form a half-complex (one unit). This unit probably dimerizes due partially to interactions between the enzymes of each unit.

It is found in the plastid. The protein resides in the chloroplast. The enzyme catalyses D-glyceraldehyde 3-phosphate + phosphate + NADP(+) = (2R)-3-phospho-glyceroyl phosphate + NADPH + H(+). It participates in carbohydrate biosynthesis; Calvin cycle. The chain is Glyceraldehyde-3-phosphate dehydrogenase A, chloroplastic (GAPA) from Chlamydomonas reinhardtii (Chlamydomonas smithii).